The sequence spans 808 residues: LisH domain-containing protein ARMC9 (808 aa).

The region spanning 7 to 39 (YEADLLGLVKEFLNFGEFQETLETFTKECKTKG) is the LisH domain. The stretch at 196–230 (ITLYKESLHNNQELLQQLQQQLMETEHKARTYKKC) forms a coiled coil. Disordered stretches follow at residues 576-599 (FDES…DALE), 650-709 (PLQR…DYCV), and 742-808 (GMEK…SYRK). Positions 579 to 599 (SIESDDEEEEKDDEEDEDALE) are enriched in acidic residues. Polar residues-rich tracts occupy residues 655–668 (VTPS…TVRK), 677–709 (TNTF…DYCV), and 775–784 (IAPQFSQSGP). Residues 785 to 808 (QQTSYSSSAGSSTRSRQSTQSYRK) are compositionally biased toward low complexity.

It localises to the cytoplasm. The protein resides in the cytoskeleton. Its subcellular location is the cilium basal body. It is found in the cell projection. The protein localises to the cilium. It localises to the microtubule organizing center. The protein resides in the centrosome. Its subcellular location is the centriole. Involved in ciliogenesis. It is required for appropriate acetylation and polyglutamylation of ciliary microtubules, and regulation of cilium length. Acts as a positive regulator of hedgehog (Hh)signaling. The sequence is that of LisH domain-containing protein ARMC9 (armc9) from Xenopus tropicalis (Western clawed frog).